The following is a 208-amino-acid chain: LexA repressor (208 aa).

The segment at residues 28–48 is a DNA-binding region (H-T-H motif); sequence RAEIARELGFRSANAAEEHLK. Catalysis depends on for autocatalytic cleavage activity residues Ser125 and Lys162.

It belongs to the peptidase S24 family. In terms of assembly, homodimer.

It catalyses the reaction Hydrolysis of Ala-|-Gly bond in repressor LexA.. In terms of biological role, represses a number of genes involved in the response to DNA damage (SOS response), including recA and lexA. In the presence of single-stranded DNA, RecA interacts with LexA causing an autocatalytic cleavage which disrupts the DNA-binding part of LexA, leading to derepression of the SOS regulon and eventually DNA repair. This chain is LexA repressor, found in Aliivibrio fischeri (strain ATCC 700601 / ES114) (Vibrio fischeri).